A 432-amino-acid chain; its full sequence is Trigger factor (432 aa).

In terms of domain architecture, PPIase FKBP-type spans 161-246; sequence EDRVTIDFTG…LKKVEERELP (86 aa).

Belongs to the FKBP-type PPIase family. Tig subfamily.

Its subcellular location is the cytoplasm. The catalysed reaction is [protein]-peptidylproline (omega=180) = [protein]-peptidylproline (omega=0). Involved in protein export. Acts as a chaperone by maintaining the newly synthesized protein in an open conformation. Functions as a peptidyl-prolyl cis-trans isomerase. In Klebsiella pneumoniae (strain 342), this protein is Trigger factor.